Here is a 1883-residue protein sequence, read N- to C-terminus: Endoribonuclease Dicer homolog 1 (1883 aa).

3 disordered regions span residues 71-97, 129-188, and 221-262; these read AESS…PELP, ARKE…DDRR, and RSGT…EKPV. A compositionally biased stretch (pro residues) spans 75 to 96; sequence PAPPPPPPPPLPEPVPVAPPEL. Composition is skewed to basic and acidic residues over residues 129–138 and 228–262; these read ARKEPRRESH and ESDR…EKPV. In terms of domain architecture, Helicase ATP-binding spans 274-413; that stretch reads VLEQAKSRNT…QEDCAIKIRN (140 aa). Residue 287–294 coordinates ATP; sequence LETGAGKT. The DECH box signature appears at 358–361; it reads DECH. Residues 577-604 are disordered; that stretch reads KSETSDVEMQNTEKHNTNDLEEGELPDS. The region spanning 629–789 is the Helicase C-terminal domain; the sequence is LIKILLKYQH…RTDLSHLDGT (161 aa). The 96-residue stretch at 817-912 folds into the Dicer dsRNA-binding fold domain; sequence AVGLIHFYCS…LPDRGSGEGE (96 aa). The segment at 901–928 is disordered; it reads TLLPDRGSGEGEKTEQNDEGEPLPGTAR. Over residues 907–916 the composition is skewed to basic and acidic residues; that stretch reads GSGEGEKTEQ. The 134-residue stretch at 1163 to 1296 folds into the PAZ domain; the sequence is HFSDYQNQGK…LPPELCLVHP (134 aa). RNase III domains follow at residues 1320 to 1498 and 1538 to 1686; these read LAVQ…VAGG and FDTL…LDSG. Residues E1576, D1672, and E1675 each contribute to the Mg(2+) site. DRBM domains lie at 1712-1775 and 1797-1872; these read HPVR…VLKE and FTRQ…LLNR.

This sequence belongs to the helicase family. Dicer subfamily. May interact with ARGONAUTE1 or PINHEAD through their common PAZ domains. The cofactor is Mg(2+). Mn(2+) is required as a cofactor.

It localises to the nucleus. Involved in the RNA silencing pathway. Cleaves double-stranded RNA to produce microRNAs (miRNAs) of 21-24 nucleotides which target the selective destruction of complementary RNAs. Regulates by this way the development of the plant. May not be involved in small interfering RNAs (siRNAs) production. The polypeptide is Endoribonuclease Dicer homolog 1 (DCL1) (Oryza sativa subsp. japonica (Rice)).